A 262-amino-acid polypeptide reads, in one-letter code: Hemin import ATP-binding protein HmuV (262 aa).

Residues 5 to 242 enclose the ABC transporter domain; the sequence is LEARKAGFAT…ELIGAVFDVE (238 aa). 37-44 is a binding site for ATP; sequence GPNGAGKS.

It belongs to the ABC transporter superfamily. Heme (hemin) importer (TC 3.A.1.14.5) family. The complex is composed of two ATP-binding proteins (HmuV), two transmembrane proteins (HmuU) and a solute-binding protein (HmuT).

The protein resides in the cell inner membrane. In terms of biological role, part of the ABC transporter complex HmuTUV involved in hemin import. Responsible for energy coupling to the transport system. The sequence is that of Hemin import ATP-binding protein HmuV from Rhodopseudomonas palustris (strain HaA2).